The primary structure comprises 704 residues: Inhibitor of carbonic anhydrase (704 aa).

The N-terminal stretch at 1-19 (MRLAFCVLLCAGSLGLCLA) is a signal peptide. 2 consecutive Transferrin-like domains span residues 25-347 (VRWC…HLRR) and 357-689 (VMWC…NVRQ). 16 disulfide bridges follow: Cys-28–Cys-67, Cys-38–Cys-58, Cys-137–Cys-213, Cys-172–Cys-188, Cys-175–Cys-196, Cys-185–Cys-198, Cys-246–Cys-260, Cys-360–Cys-392, Cys-370–Cys-383, Cys-417–Cys-699, Cys-440–Cys-662, Cys-472–Cys-549, Cys-496–Cys-690, Cys-506–Cys-520, Cys-517–Cys-532, and Cys-589–Cys-603. A glycan (N-linked (GlcNAc...) asparagine) is linked at Asn-491.

Belongs to the transferrin family. As to quaternary structure, monomer. Interacts (via transferrin-like domain 2) with CA2. In terms of processing, N-glycosylated. Blood plasma (at protein level).

Its subcellular location is the secreted. Functionally, inhibitor for carbonic anhydrase 2 (CA2). Does not bind iron ions. The sequence is that of Inhibitor of carbonic anhydrase from Sus scrofa (Pig).